Reading from the N-terminus, the 233-residue chain is ASEGNGRGPYVQADLAYAAERITHDYPEATAQKKGTTISTVSDYFRNIRTHSVHPRVSVGYDFGGWRIAADYARYRKWNNSKYSVSIKKLQNQYNKKTENQENGTFHAASSLGLSAVYDFKLNDKFKPYIGARVAYGHVRHSIDSTKKTTGFLTTAGARGAAPTVSSPYKNTQDAHQESNSIRRVGLGVIAGVGFDITPNLTLDAGYRYHNWGRLENTRFKTHEASLGVRYRF.

Residue Ala1 is a signal peptide.

It belongs to the opacity porin family.

Its subcellular location is the cell outer membrane. Its function is as follows. Implicated in a number of adherence functions. OPA proteins are implicated in pathogenesis and are subject to phase variation. This chain is Opacity protein opA67, found in Neisseria gonorrhoeae.